A 208-amino-acid polypeptide reads, in one-letter code: Protein-L-isoaspartate O-methyltransferase (208 aa).

Residue Ser-59 is part of the active site.

It belongs to the methyltransferase superfamily. L-isoaspartyl/D-aspartyl protein methyltransferase family.

The protein resides in the cytoplasm. The catalysed reaction is [protein]-L-isoaspartate + S-adenosyl-L-methionine = [protein]-L-isoaspartate alpha-methyl ester + S-adenosyl-L-homocysteine. Its function is as follows. Catalyzes the methyl esterification of L-isoaspartyl residues in peptides and proteins that result from spontaneous decomposition of normal L-aspartyl and L-asparaginyl residues. It plays a role in the repair and/or degradation of damaged proteins. This chain is Protein-L-isoaspartate O-methyltransferase, found in Sodalis glossinidius (strain morsitans).